The primary structure comprises 421 residues: MPKQIDTILTNIGQLLTMESGGPRSGGSMQDLRVTEDAVIGISDGRIVFAGHQGAEEGYEARDIIDCGGRLVTPGLVDPHTHLVFGGSREKELNLKIQGMSYLDILAQGGGILSTVKDTKAASEEELIEKGLFHLGRMLSYGITTAEVKSGYGLDKDTELKQLTAAKKLGERQPVDLVTTFMGAHAIPPEYRNSPDEFLNRMLQLLPEIKEKGLAQFADIFTETGVFTVSQSRNYLKKASEAGFGLKIHADEIDPLGGAELAAELHAVSADHLVGASDEGIEKLAASGTIAVLLPGTTFYLGKHTYARAREMIDAGVRVSLATDFNPGSSPTENLQLIMSIAALHLKMTAEEIWHAVTVNAAYAIGKGEEAGQIKAGRAADIVIWEAPNYMYIPYHYGVNHVRRVIKNGKTVVSREGAALG.

Fe(3+) is bound by residues histidine 80 and histidine 82. Zn(2+) is bound by residues histidine 80 and histidine 82. 4-imidazolone-5-propanoate is bound by residues arginine 89, tyrosine 152, and histidine 185. Tyrosine 152 contacts N-formimidoyl-L-glutamate. Histidine 249 lines the Fe(3+) pocket. Histidine 249 is a Zn(2+) binding site. Glutamate 252 contacts 4-imidazolone-5-propanoate. Fe(3+) is bound at residue aspartate 324. Aspartate 324 serves as a coordination point for Zn(2+). Residues asparagine 326 and glycine 328 each coordinate N-formimidoyl-L-glutamate. Serine 329 lines the 4-imidazolone-5-propanoate pocket.

The protein belongs to the metallo-dependent hydrolases superfamily. HutI family. Zn(2+) is required as a cofactor. It depends on Fe(3+) as a cofactor.

Its subcellular location is the cytoplasm. It catalyses the reaction 4-imidazolone-5-propanoate + H2O = N-formimidoyl-L-glutamate. It functions in the pathway amino-acid degradation; L-histidine degradation into L-glutamate; N-formimidoyl-L-glutamate from L-histidine: step 3/3. Catalyzes the hydrolytic cleavage of the carbon-nitrogen bond in imidazolone-5-propanoate to yield N-formimidoyl-L-glutamate. It is the third step in the universal histidine degradation pathway. This Bacillus velezensis (strain DSM 23117 / BGSC 10A6 / LMG 26770 / FZB42) (Bacillus amyloliquefaciens subsp. plantarum) protein is Imidazolonepropionase.